The following is a 272-amino-acid chain: Aquaporin-11 (272 aa).

Topologically, residues 1–14 are cytoplasmic; it reads MTALRALWSEMQDT. The chain crosses the membrane as a helical span at residues 15–35; that stretch reads CTSLGLMLSVVLLAGLARVVA. Residues 36–47 lie on the Lumenal side of the membrane; that stretch reads RQQQLHRPMAHA. A helical membrane pass occupies residues 48-68; it reads FVLEFLATLQLCCCTHELLLL. Residues 69 to 75 lie on the Cytoplasmic side of the membrane; it reads SEQEPAH. A helical membrane pass occupies residues 76-96; it reads PTWPLTLIYFFTLVHGLTLVG. Topologically, residues 97-167 are lumenal; that stretch reads TSSNPCGVMM…NPIQVDLPKA (71 aa). The NPC signature appears at 100 to 102; the sequence is NPC. A helical transmembrane segment spans residues 168-188; it reads VIVEALCSFIFHSALLNFQEV. At 189–195 the chain is on the cytoplasmic side; sequence RPKLRIH. Residues 196-216 form a helical membrane-spanning segment; the sequence is LLAALITFLVYAGGSLTGAVF. Residues 217-219 carry the NPA motif; it reads NPA. The Lumenal segment spans residues 217–235; it reads NPALALSLHFKCFDEAFLQ. A helical transmembrane segment spans residues 236-256; it reads FFIVYWLAPSLGILLMILMFS. Residues 257–272 lie on the Cytoplasmic side of the membrane; the sequence is FFLPWLYNNHTINKKE.

The protein belongs to the MIP/aquaporin (TC 1.A.8) family. AQP11/AQP12 subfamily. As to quaternary structure, homodimer; disulfide-linked. Homotetramer. Can also form homomultimer. In terms of processing, not glycosylated. As to expression, expressed in retina specifically at retinal Mueller glial cells.

The protein resides in the endoplasmic reticulum membrane. It is found in the cytoplasmic vesicle membrane. The protein localises to the cell membrane. It carries out the reaction H2O(in) = H2O(out). The enzyme catalyses glycerol(in) = glycerol(out). It catalyses the reaction H2O2(out) = H2O2(in). Its function is as follows. Channel protein that facilitates the transport of water, glycerol and hydrogen peroxide across membrane of cell or organelles guaranteeing intracellular homeostasis in several organes like liver, kidney and brain. In situation of stress, participates in endoplasmic reticulum (ER) homeostasis by regulating redox homeostasis through the transport of hydrogen peroxide across the endoplasmic reticulum membrane thereby regulating the oxidative stress through the NADPH oxidase 2 pathway. Plays a role by maintaining an environment suitable for translation or protein foldings in the ER lumen namely by participating in the PKD1 glycosylation processing resulting in regulation of PKD1 membrane trafficking thereby preventing the accumulation of unfolding protein in ER. Plays a role in the proximal tubule function by regulating its endosomal acidification. May play a role in postnatal kidney development. This is Aquaporin-11 from Equus caballus (Horse).